Reading from the N-terminus, the 318-residue chain is 4-hydroxy-3-methylbut-2-enyl diphosphate reductase (318 aa).

Cys21 contributes to the [4Fe-4S] cluster binding site. His50 and His83 together coordinate (2E)-4-hydroxy-3-methylbut-2-enyl diphosphate. Dimethylallyl diphosphate contacts are provided by His50 and His83. The isopentenyl diphosphate site is built by His50 and His83. Residue Cys105 participates in [4Fe-4S] cluster binding. (2E)-4-hydroxy-3-methylbut-2-enyl diphosphate is bound at residue His133. Residue His133 participates in dimethylallyl diphosphate binding. An isopentenyl diphosphate-binding site is contributed by His133. Glu135 serves as the catalytic Proton donor. Thr176 provides a ligand contact to (2E)-4-hydroxy-3-methylbut-2-enyl diphosphate. A [4Fe-4S] cluster-binding site is contributed by Cys206. Ser234, Ser235, Asn236, and Ser278 together coordinate (2E)-4-hydroxy-3-methylbut-2-enyl diphosphate. Residues Ser234, Ser235, Asn236, and Ser278 each coordinate dimethylallyl diphosphate. Isopentenyl diphosphate is bound by residues Ser234, Ser235, Asn236, and Ser278.

The protein belongs to the IspH family. It depends on [4Fe-4S] cluster as a cofactor.

The catalysed reaction is isopentenyl diphosphate + 2 oxidized [2Fe-2S]-[ferredoxin] + H2O = (2E)-4-hydroxy-3-methylbut-2-enyl diphosphate + 2 reduced [2Fe-2S]-[ferredoxin] + 2 H(+). It carries out the reaction dimethylallyl diphosphate + 2 oxidized [2Fe-2S]-[ferredoxin] + H2O = (2E)-4-hydroxy-3-methylbut-2-enyl diphosphate + 2 reduced [2Fe-2S]-[ferredoxin] + 2 H(+). It functions in the pathway isoprenoid biosynthesis; dimethylallyl diphosphate biosynthesis; dimethylallyl diphosphate from (2E)-4-hydroxy-3-methylbutenyl diphosphate: step 1/1. It participates in isoprenoid biosynthesis; isopentenyl diphosphate biosynthesis via DXP pathway; isopentenyl diphosphate from 1-deoxy-D-xylulose 5-phosphate: step 6/6. Functionally, catalyzes the conversion of 1-hydroxy-2-methyl-2-(E)-butenyl 4-diphosphate (HMBPP) into a mixture of isopentenyl diphosphate (IPP) and dimethylallyl diphosphate (DMAPP). Acts in the terminal step of the DOXP/MEP pathway for isoprenoid precursor biosynthesis. The polypeptide is 4-hydroxy-3-methylbut-2-enyl diphosphate reductase (Shewanella oneidensis (strain ATCC 700550 / JCM 31522 / CIP 106686 / LMG 19005 / NCIMB 14063 / MR-1)).